A 246-amino-acid polypeptide reads, in one-letter code: MFKAAINAEVFKDAIEAVSTLVDEAKFRITKDSISARAVDPANVAMVAFDLNAKAFDTFEATDGEIGIDLVRFMDILGMTARDDRLELNLNEETRKLEIRTGGLAYTLSLLDPGSIRKEPKVPALELPGKIVLNGAELKRAVKAAEKVSDHMALGVQDKTFYVEAEGDLDKVRLEIPESNLISLQATSNVRSLFSLDYLNDIVKSLGKAEQVTIDLGTDYPVKFTFSIASGNGTVIYLLAPRIESE.

This sequence belongs to the PCNA family. As to quaternary structure, homotrimer. The subunits circularize to form a toroid; DNA passes through its center. Replication factor C (RFC) is required to load the toroid on the DNA.

In terms of biological role, sliding clamp subunit that acts as a moving platform for DNA processing. Responsible for tethering the catalytic subunit of DNA polymerase and other proteins to DNA during high-speed replication. This chain is DNA polymerase sliding clamp, found in Methanocella arvoryzae (strain DSM 22066 / NBRC 105507 / MRE50).